Here is a 640-residue protein sequence, read N- to C-terminus: 1-deoxy-D-xylulose-5-phosphate synthase (640 aa).

Thiamine diphosphate is bound by residues histidine 79 and 120 to 122 (AHS). Residue aspartate 151 participates in Mg(2+) binding. Thiamine diphosphate-binding positions include 152–153 (GA), asparagine 180, tyrosine 289, and glutamate 371. Asparagine 180 contacts Mg(2+).

The protein belongs to the transketolase family. DXPS subfamily. Homodimer. Mg(2+) is required as a cofactor. Requires thiamine diphosphate as cofactor.

The enzyme catalyses D-glyceraldehyde 3-phosphate + pyruvate + H(+) = 1-deoxy-D-xylulose 5-phosphate + CO2. The protein operates within metabolic intermediate biosynthesis; 1-deoxy-D-xylulose 5-phosphate biosynthesis; 1-deoxy-D-xylulose 5-phosphate from D-glyceraldehyde 3-phosphate and pyruvate: step 1/1. Functionally, catalyzes the acyloin condensation reaction between C atoms 2 and 3 of pyruvate and glyceraldehyde 3-phosphate to yield 1-deoxy-D-xylulose-5-phosphate (DXP). In Novosphingobium aromaticivorans (strain ATCC 700278 / DSM 12444 / CCUG 56034 / CIP 105152 / NBRC 16084 / F199), this protein is 1-deoxy-D-xylulose-5-phosphate synthase.